A 480-amino-acid polypeptide reads, in one-letter code: UDP-N-acetylmuramate--L-alanine ligase (480 aa).

An ATP-binding site is contributed by 115–121; that stretch reads GTHGKTT.

It belongs to the MurCDEF family.

Its subcellular location is the cytoplasm. The catalysed reaction is UDP-N-acetyl-alpha-D-muramate + L-alanine + ATP = UDP-N-acetyl-alpha-D-muramoyl-L-alanine + ADP + phosphate + H(+). Its pathway is cell wall biogenesis; peptidoglycan biosynthesis. Cell wall formation. The polypeptide is UDP-N-acetylmuramate--L-alanine ligase (Gluconacetobacter diazotrophicus (strain ATCC 49037 / DSM 5601 / CCUG 37298 / CIP 103539 / LMG 7603 / PAl5)).